We begin with the raw amino-acid sequence, 1021 residues long: DNA-directed RNA polymerase 2B, chloroplastic/mitochondrial (1021 aa).

The interval 315-337 (KKQKAEKDKQKEDGEHVTQEQEK) is disordered. Residues D722, K797, and D954 contribute to the active site.

Belongs to the phage and mitochondrial RNA polymerase family.

The protein resides in the plastid. Its subcellular location is the chloroplast. The protein localises to the mitochondrion. It catalyses the reaction RNA(n) + a ribonucleoside 5'-triphosphate = RNA(n+1) + diphosphate. DNA-dependent RNA polymerase catalyzes the transcription of DNA into RNA using the four ribonucleoside triphosphates as substrates. This is DNA-directed RNA polymerase 2B, chloroplastic/mitochondrial (RPOT2-TOM) from Nicotiana tabacum (Common tobacco).